The following is an 802-amino-acid chain: Oligophrenin-1 (802 aa).

The 104-residue stretch at 265-368 (QPTIEGYLYT…WMEAMDGKEP (104 aa)) folds into the PH domain. Positions 380–564 (MELNEVGFKF…ILIEHFGKIY (185 aa)) constitute a Rho-GAP domain. 4 disordered regions span residues 569–588 (EESAAPPVPPPRVTARRHKP), 607–666 (LDES…EPCP), 680–770 (GGTK…NAGE), and 783–802 (FETASRKTGSSQGRLPGDES). Over residues 616–627 (HQTPNGTITSSI) the composition is skewed to polar residues. Positions 716-732 (HHKEGDADSFSKVRPPG) are enriched in basic and acidic residues.

Interacts with HOMER1. Interacts with AMPA receptor complexes. Interacts with SH3GL2 (endophilin-A1). Interacts (via C-terminus) with NR1D1. As to expression, expressed in brain.

The protein resides in the postsynapse. It is found in the presynapse. Its subcellular location is the cell projection. The protein localises to the axon. It localises to the dendritic spine. The protein resides in the dendrite. It is found in the cytoplasm. Functionally, stimulates GTP hydrolysis of members of the Rho family. Its action on RHOA activity and signaling is implicated in growth and stabilization of dendritic spines, and therefore in synaptic function. Critical for the stabilization of AMPA receptors at postsynaptic sites. Critical for the regulation of synaptic vesicle endocytosis at presynaptic terminals. Required for the localization of NR1D1 to dendrites, can suppress its repressor activity and protect it from proteasomal degradation. This Homo sapiens (Human) protein is Oligophrenin-1 (OPHN1).